Reading from the N-terminus, the 84-residue chain is UPF0473 protein CKL_1327 (84 aa).

Belongs to the UPF0473 family.

This is UPF0473 protein CKL_1327 from Clostridium kluyveri (strain ATCC 8527 / DSM 555 / NBRC 12016 / NCIMB 10680 / K1).